The chain runs to 850 residues: Trimethylguanosine synthase (850 aa).

Residues Asn-54–Pro-85 are disordered. Position 61 is a phosphothreonine (Thr-61). Ser-92 and Ser-152 each carry phosphoserine. Disordered stretches follow at residues Asp-278 to His-311, Glu-327 to Pro-454, and Ile-523 to Cys-566. Basic and acidic residues predominate over residues Thr-363 to Ser-374. The segment covering Ser-375–Thr-390 has biased composition (polar residues). Ser-405 and Ser-431 each carry phosphoserine. Acidic residues predominate over residues Asp-424–Asp-435. Positions Ser-548–Glu-562 are enriched in basic and acidic residues. A Phosphoserine modification is found at Ser-571. The segment at Thr-595–Leu-628 is disordered. Over residues Lys-611–Lys-624 the composition is skewed to basic residues. Asp-713 contributes to the S-adenosyl-L-methionine binding site.

This sequence belongs to the methyltransferase superfamily. Trimethylguanosine synthase family. In terms of assembly, may form homooligomers. Interacts with CREBBP/CBP, EED/WAIT1, EP300/P300, NCOA6/PRIP, PPARBP/PBP and SMN. A 55 kDa isoform is widely expressed while a 90 kDa isoform is detected exclusively in brain and testis (at protein level).

The protein localises to the cytoplasm. The protein resides in the nucleus. It localises to the cajal body. Its subcellular location is the nucleolus. It catalyses the reaction a 5'-end (N(7)-methyl 5'-triphosphoguanosine)-ribonucleoside in snRNA + S-adenosyl-L-methionine = a 5'-end (N(2),N(7)-dimethyl 5'-triphosphoguanosine)-ribonucleoside in snRNA + S-adenosyl-L-homocysteine + H(+). It carries out the reaction a 5'-end (N(7)-methyl 5'-triphosphoguanosine)-ribonucleoside in snoRNA + S-adenosyl-L-methionine = a 5'-end (N(2),N(7)-dimethyl 5'-triphosphoguanosine)-ribonucleoside in snoRNA + S-adenosyl-L-homocysteine + H(+). The catalysed reaction is a 5'-end (N(2),N(7)-dimethyl 5'-triphosphoguanosine)-ribonucleoside in snRNA + S-adenosyl-L-methionine = a 5'-end (N(2),N(2),N(7)-trimethyl 5'-triphosphoguanosine)-ribonucleoside in snRNA + S-adenosyl-L-homocysteine + H(+). The enzyme catalyses a 5'-end (N(2),N(7)-dimethyl 5'-triphosphoguanosine)-ribonucleoside in snoRNA + S-adenosyl-L-methionine = a 5'-end (N(2),N(2),N(7)-trimethyl 5'-triphosphoguanosine)-ribonucleoside in snoRNA + S-adenosyl-L-homocysteine + H(+). In terms of biological role, catalyzes the 2 serial methylation steps for the conversion of the 7-monomethylguanosine (m(7)G) caps of snRNAs and snoRNAs to a 2,2,7-trimethylguanosine (m(2,2,7)G) cap structure. The enzyme is specific for guanine, and N7 methylation must precede N2 methylation. Hypermethylation of the m7G cap of U snRNAs leads to their concentration in nuclear foci, their colocalization with coilin and the formation of canonical Cajal bodies (CBs). Plays a role in transcriptional regulation. In Rattus norvegicus (Rat), this protein is Trimethylguanosine synthase.